The following is a 367-amino-acid chain: Innexin inx2 (367 aa).

Residues 1–22 lie on the Cytoplasmic side of the membrane; that stretch reads MFDVFGSVKGLLKIDQVCIDNN. Residues 23 to 43 traverse the membrane as a helical segment; the sequence is VFRMHYKATVIILIAFSLLVT. The Extracellular segment spans residues 44 to 109; it reads SRQYIGDPID…EDEVKYHKYY (66 aa). The helical transmembrane segment at 110–130 threads the bilayer; it reads QWVCFVLFFQAILFYVPRYLW. The tract at residues 130-179 is interaction with shg; it reads WKSWEGGRLKMLVMDLNSPIVNDECKNDRKKILVDYFIGNLNRHNFYAFR. The Cytoplasmic segment spans residues 131–179; that stretch reads KSWEGGRLKMLVMDLNSPIVNDECKNDRKKILVDYFIGNLNRHNFYAFR. The chain crosses the membrane as a helical span at residues 180–200; it reads FFVCEALNFVNVIGQIYFVDF. Topologically, residues 201 to 266 are extracellular; the sequence is FLDGEFSTYG…VLPLNIVNEK (66 aa). Residues 267–287 form a helical membrane-spanning segment; sequence IYVFLWFWFIILSIMSGISLI. At 288-367 the chain is on the cytoplasmic side; the sequence is YRIAVVAGPK…HSAHKRPFDA (80 aa).

Belongs to the pannexin family. As to quaternary structure, monomer and heterooligomer with ogre or Inx3 (via cytoplasmic C-terminal region). Interacts (via cytoplasmic loop) with shg (via cytoplasmic region). Interacts with arm. As to expression, in ovary, expressed in inner germarial sheath cells, prefollicular cells, follicle cells, nurse cells and oocytes. Expressed in embryonic epithelial cells. Expressed in foregut and hindgut from stage 11-17, segmentally repeated tracheal placodes at stage 14, salivary gland at stage 16 and proventriculus at stage 16-17 (at protein level). During germband extension stage (stage 7), expressed in epidermal epithelial cells. Expressed in cephalic furrow. Repeating epidermal pattern emerges at stage 11, refines to one or two cells at each side of the segment borders by stage 13. Expressed in the imaginal wing disk. In pupae, expressed in the CNS and in primary, secondary and tertiary pigment cells of the retina. Expressed in optic lamina of the adult CNS.

Its subcellular location is the cell membrane. It localises to the cell junction. It is found in the gap junction. The protein localises to the cytoplasm. The protein resides in the apical cell membrane. Its subcellular location is the apicolateral cell membrane. It localises to the basolateral cell membrane. It is found in the lateral cell membrane. Structural components of the gap junctions. Involved in gap junctional communication between germline and somatic cells which is essential for normal oogenesis. In embryonic epidermis, required for epithelial morphogenesis. Required for keyhole formation during early stages of proventriculus development in response to wg signaling. In follicle cells, promotes the formation of egg chambers in part through regulation of shg and baz at the boundary between germ cells and follicle cells. In inner germarial sheath cells, required for survival of early germ cells and for cyst formation. This chain is Innexin inx2 (Inx2), found in Drosophila melanogaster (Fruit fly).